Consider the following 215-residue polypeptide: Pyrrolidone-carboxylate peptidase 1 (215 aa).

Active-site residues include Glu80, Cys143, and His167.

Belongs to the peptidase C15 family. As to quaternary structure, homotetramer.

It is found in the cytoplasm. It catalyses the reaction Release of an N-terminal pyroglutamyl group from a polypeptide, the second amino acid generally not being Pro.. In terms of biological role, removes 5-oxoproline from various penultimate amino acid residues except L-proline. In Ralstonia nicotianae (strain ATCC BAA-1114 / GMI1000) (Ralstonia solanacearum), this protein is Pyrrolidone-carboxylate peptidase 1.